Here is a 343-residue protein sequence, read N- to C-terminus: MPQDVRFDLPFETPVSKHLESARARHLRWVWEMRLVHSREGFEEYRSWDLPQAAARTYPHASADDMVVLMNWFSLAFLFDDQFDASRPDRADRIAEVARELIVTPLRPAGTPPRVACPITLAWTEVWKHLSHGMSLTWQSRFAASWGRFLEAHCEEVDLAARGLEGTLGLVEFTEFRRRTVGIHHSIDAGERSRGFEVPAQAMAHPVMERMRDLAADTIGFMNDIHSFEREKRRGDGHNLIAVLRRERGCSWQEATDEAYRMTIARLDEYLELQERVPQMCDELRLDEAQRDGVRLGVEAIQHWINGNYEWALTSGRYAAAKEGAVATAELAGRGSVDDLLTV.

2 residues coordinate Mg(2+): aspartate 80 and aspartate 84. A DDXXD motif motif is present at residues 80 to 84; sequence DDQFD. Arginine 177 contributes to the substrate binding site. The Mg(2+) site is built by asparagine 223 and serine 227. A substrate-binding site is contributed by arginine 230. Residue glutamate 231 participates in Mg(2+) binding. 317-318 contacts substrate; it reads RY.

Belongs to the terpene synthase family. Mg(2+) is required as a cofactor.

It catalyses the reaction (2E,6E)-farnesyl diphosphate + H2O = 7-epi-alpha-eudesmol + diphosphate. It functions in the pathway secondary metabolite biosynthesis; terpenoid biosynthesis. Catalyzes the conversion of (2E,6E)-farnesyl diphosphate (FPP) to yield the bicyclic sesquiterpenol 7-epi-alpha-eudesmol via a 1,10-cyclization, which requires the abstraction of the pyrophosphate from FPP to yield the (E,E)-germacradienyl cation. The only accepted substrate is (2E,6E)-farnesyl diphosphate (FPP). This is 7-epi-alpha-eudesmol synthase ((2E,6E)-farnesyl diphosphate cyclizing) from Streptomyces viridochromogenes (strain DSM 40736 / JCM 4977 / BCRC 1201 / Tue 494).